We begin with the raw amino-acid sequence, 100 residues long: UPF0251 protein swp_0615 (100 aa).

Belongs to the UPF0251 family.

The protein is UPF0251 protein swp_0615 of Shewanella piezotolerans (strain WP3 / JCM 13877).